The chain runs to 430 residues: Histidinol dehydrogenase (430 aa).

3 residues coordinate NAD(+): tyrosine 124, glutamine 185, and asparagine 208. Residues serine 233, glutamine 255, and histidine 258 each coordinate substrate. Residues glutamine 255 and histidine 258 each coordinate Zn(2+). Active-site proton acceptor residues include glutamate 324 and histidine 325. Substrate contacts are provided by histidine 325, aspartate 358, glutamate 412, and histidine 418. Aspartate 358 lines the Zn(2+) pocket. Histidine 418 serves as a coordination point for Zn(2+).

This sequence belongs to the histidinol dehydrogenase family. Zn(2+) serves as cofactor.

It carries out the reaction L-histidinol + 2 NAD(+) + H2O = L-histidine + 2 NADH + 3 H(+). It functions in the pathway amino-acid biosynthesis; L-histidine biosynthesis; L-histidine from 5-phospho-alpha-D-ribose 1-diphosphate: step 9/9. Its function is as follows. Catalyzes the sequential NAD-dependent oxidations of L-histidinol to L-histidinaldehyde and then to L-histidine. This chain is Histidinol dehydrogenase, found in Leptospira biflexa serovar Patoc (strain Patoc 1 / Ames).